The sequence spans 284 residues: tRNA dimethylallyltransferase (284 aa).

6-13 (GPTASGKS) contacts ATP. 8 to 13 (TASGKS) serves as a coordination point for substrate. Positions 31 to 34 (DSLS) are interaction with substrate tRNA.

The protein belongs to the IPP transferase family. In terms of assembly, monomer. It depends on Mg(2+) as a cofactor.

It carries out the reaction adenosine(37) in tRNA + dimethylallyl diphosphate = N(6)-dimethylallyladenosine(37) in tRNA + diphosphate. Functionally, catalyzes the transfer of a dimethylallyl group onto the adenine at position 37 in tRNAs that read codons beginning with uridine, leading to the formation of N6-(dimethylallyl)adenosine (i(6)A). This chain is tRNA dimethylallyltransferase, found in Nautilia profundicola (strain ATCC BAA-1463 / DSM 18972 / AmH).